The chain runs to 505 residues: MLLSTQSIPIKKSVDDIWPVAGKRVLIRVDFNVPTSSGGIDDDFRIRSAIPTIRRIVDQGGICILISHLGRPTGVDYDTAHAEQEKRQTPVQLPNSRGKTAFFSGLRGDAKATILAWSSQREKAATLSNPYGSGKTAVFARLPEEEKRRLLLRFMSEHKEELFPQLGSAGYEKEFSLEPVAVKLAELLDQHVYFGHDCLGAQADIAKLRCGEVMLLENLRFYTNENSSDERKRMLMARILASYADVYINDAFGTAHRDSASLTGIPRVLQQGAAGYLMEKEISYFSKVLNNPPRPLLAIIGGAKLSDKMQVLENLLDCVDSLFIGGGLAYTFLRSQGYSIGTSHFEEAFVPFAQALPLAGSGRQVRVVLPEDHVCHAHTRPAEAPLTTTSANIPDGYAGLDIGPLTIQSITHLVRQCSSVIWNGPLGMFEMPYYAFGTFSIARVVSQSSAAKGTTSIVGGGDTASAMMKSGEAAHISHISTGGNASLELLEGKVLAAVAVLDNKE.

Residues V29, D30, F31, N32, R45, S67, H68, G70, R71, L219, R220, H256, and R257 each contribute to the (2R)-3-phosphoglycerate site. Residues G302 and A303 each contribute to the ADP site. G302 serves as a coordination point for CDP. AMP contacts are provided by A303 and K304. A303 is a binding site for ATP. A303 contributes to the Mg(2+) binding site. K304 serves as a coordination point for (2R)-3-phosphoglycerate. D307 lines the CDP pocket. Mg(2+) is bound at residue D307. K308 and G326 together coordinate ADP. K308 serves as a coordination point for AMP. K308 provides a ligand contact to ATP. Residue G326 participates in CDP binding. Residues G327 and G399 each coordinate AMP. ATP is bound by residues G327 and G399. Positions 399 and 423 each coordinate ADP. Residues G424, L426, and F429 each coordinate CDP. Positions 429, 430, 462, and 463 each coordinate ADP. E430 provides a ligand contact to AMP. ATP is bound by residues E430, D462, and T463. Residue D462 coordinates Mg(2+).

This sequence belongs to the phosphoglycerate kinase family. In terms of assembly, monomer. It depends on Mg(2+) as a cofactor.

It localises to the glycosome. The enzyme catalyses (2R)-3-phosphoglycerate + ATP = (2R)-3-phospho-glyceroyl phosphate + ADP. The protein operates within carbohydrate degradation; glycolysis; pyruvate from D-glyceraldehyde 3-phosphate: step 2/5. The protein is Phosphoglycerate kinase, glycosomal (PGKA) of Crithidia fasciculata.